The primary structure comprises 867 residues: Nuclear cap-binding protein subunit 1 (867 aa).

The 220-residue stretch at 9–228 (LLRIGDRCPE…DLWERIQVLS (220 aa)) folds into the MIF4G domain. Positions 752–797 (SADGDVPNLRAGDPNVNSSARDPEATTMEIDNENGGDNDSQLNGQN) are disordered. Over residues 788–797 (DNDSQLNGQN) the composition is skewed to polar residues.

This sequence belongs to the NCBP1 family. As to quaternary structure, component of the nuclear cap-binding complex (CBC), a heterodimer composed of ABH1/CBP80 and CBP20 that interacts with m7GpppG-capped RNA.

The protein localises to the nucleus. The protein resides in the cytoplasm. Its function is as follows. Component of the cap-binding complex (CBC), which binds cotranscriptionally to the 5'-cap of pre-mRNAs and is involved in various processes such as pre-mRNA splicing and RNA-mediated gene silencing (RNAi) by microRNAs (miRNAs). The CBC complex is involved in miRNA-mediated RNA interference and is required for primary miRNA processing. In the CBC complex, ABH1/CBP80 does not bind directly capped RNAs (m7GpppG-capped RNA) but is required to stabilize the movement of the N-terminal loop of CBP20 and lock the CBC into a high affinity cap-binding state with the cap structure. The polypeptide is Nuclear cap-binding protein subunit 1 (ABH1) (Oryza sativa subsp. japonica (Rice)).